The following is a 153-amino-acid chain: Transcriptional repressor NrdR (153 aa).

A zinc finger spans residues 3 to 34 (CPSCHHSGTRVLESRPVEEGRSIRRRRECEQC). Residues 49-139 (LIVVKKEGTR…VYRQFKDINV (91 aa)) form the ATP-cone domain.

It belongs to the NrdR family. It depends on Zn(2+) as a cofactor.

In terms of biological role, negatively regulates transcription of bacterial ribonucleotide reductase nrd genes and operons by binding to NrdR-boxes. This chain is Transcriptional repressor NrdR, found in Geobacillus kaustophilus (strain HTA426).